The chain runs to 407 residues: Probable tRNA sulfurtransferase (407 aa).

Residues 61-165 (NEIIQRLSKV…MDAIYIYEKV (105 aa)) form the THUMP domain. ATP-binding positions include 183 to 184 (ML), 208 to 209 (HF), Arg-265, Gly-287, and Gln-296.

This sequence belongs to the ThiI family.

Its subcellular location is the cytoplasm. It catalyses the reaction [ThiI sulfur-carrier protein]-S-sulfanyl-L-cysteine + a uridine in tRNA + 2 reduced [2Fe-2S]-[ferredoxin] + ATP + H(+) = [ThiI sulfur-carrier protein]-L-cysteine + a 4-thiouridine in tRNA + 2 oxidized [2Fe-2S]-[ferredoxin] + AMP + diphosphate. It carries out the reaction [ThiS sulfur-carrier protein]-C-terminal Gly-Gly-AMP + S-sulfanyl-L-cysteinyl-[cysteine desulfurase] + AH2 = [ThiS sulfur-carrier protein]-C-terminal-Gly-aminoethanethioate + L-cysteinyl-[cysteine desulfurase] + A + AMP + 2 H(+). The protein operates within cofactor biosynthesis; thiamine diphosphate biosynthesis. Its function is as follows. Catalyzes the ATP-dependent transfer of a sulfur to tRNA to produce 4-thiouridine in position 8 of tRNAs, which functions as a near-UV photosensor. Also catalyzes the transfer of sulfur to the sulfur carrier protein ThiS, forming ThiS-thiocarboxylate. This is a step in the synthesis of thiazole, in the thiamine biosynthesis pathway. The sulfur is donated as persulfide by IscS. The chain is Probable tRNA sulfurtransferase from Staphylococcus epidermidis (strain ATCC 35984 / DSM 28319 / BCRC 17069 / CCUG 31568 / BM 3577 / RP62A).